The following is a 493-amino-acid chain: Transcript termination protein OPG145 (493 aa).

The Helicase ATP-binding domain maps to 100–256 (MIKLKRPLYI…NSIINIAKLS (157 aa)). 113–120 (LACGFGKT) serves as a coordination point for ATP. Positions 206–209 (DESH) match the DESH box motif.

The protein belongs to the helicase family. Poxviruses subfamily. In terms of assembly, interacts with OPG087. Might be part of a transcription complex composed at least of OPG087, OPG110, and OPG145.

The protein localises to the virion. DNA helicase which seems to act as a postreplicative transcription termination factor. Involved in ATP-dependent release of nascent RNA. Forms a stable complex with single-stranded DNA, and to a lesser extent RNA. The sequence is that of Transcript termination protein OPG145 (OPG145) from Variola virus (isolate Human/India/Ind3/1967) (VARV).